A 165-amino-acid chain; its full sequence is NADH-quinone oxidoreductase subunit I (165 aa).

2 4Fe-4S ferredoxin-type domains span residues 57-86 and 96-125; these read RRYE…IESE and TRYD…ETHI. [4Fe-4S] cluster is bound by residues C66, C69, C72, C76, C105, C108, C111, and C115.

This sequence belongs to the complex I 23 kDa subunit family. NDH-1 is composed of 14 different subunits. Subunits NuoA, H, J, K, L, M, N constitute the membrane sector of the complex. [4Fe-4S] cluster is required as a cofactor.

It localises to the cell inner membrane. The enzyme catalyses a quinone + NADH + 5 H(+)(in) = a quinol + NAD(+) + 4 H(+)(out). NDH-1 shuttles electrons from NADH, via FMN and iron-sulfur (Fe-S) centers, to quinones in the respiratory chain. The immediate electron acceptor for the enzyme in this species is believed to be ubiquinone. Couples the redox reaction to proton translocation (for every two electrons transferred, four hydrogen ions are translocated across the cytoplasmic membrane), and thus conserves the redox energy in a proton gradient. In Methylibium petroleiphilum (strain ATCC BAA-1232 / LMG 22953 / PM1), this protein is NADH-quinone oxidoreductase subunit I.